A 101-amino-acid polypeptide reads, in one-letter code: Large ribosomal subunit protein uL24 (101 aa).

The protein belongs to the universal ribosomal protein uL24 family. In terms of assembly, part of the 50S ribosomal subunit.

Functionally, one of two assembly initiator proteins, it binds directly to the 5'-end of the 23S rRNA, where it nucleates assembly of the 50S subunit. One of the proteins that surrounds the polypeptide exit tunnel on the outside of the subunit. This Borrelia garinii subsp. bavariensis (strain ATCC BAA-2496 / DSM 23469 / PBi) (Borreliella bavariensis) protein is Large ribosomal subunit protein uL24.